The sequence spans 158 residues: 14-3-3 protein gamma (158 aa).

An interaction with SPATA18/MIEAP region spans residues 1–158 (AAAMKNVTEL…TSDQQDDDGG (158 aa)). Position 48 is a phosphoserine (Ser-48). Tyr-60 is modified (phosphotyrosine). Thr-72 carries the post-translational modification Phosphothreonine. Ser-130 carries the post-translational modification Phosphoserine. Residue Thr-149 is modified to Phosphothreonine. Phosphoserine is present on Ser-150.

Belongs to the 14-3-3 family. In terms of assembly, homodimer. Part of a complex that contains DSG3, PKP1, YAP1 and YWHAG; the complex is required for localization of DSG3 and YAP1 to the cell membrane in keratinocytes. Interacts with SAMSN1. Interacts with RAF1, SSH1 and CRTC2/TORC2. Interacts with ABL1 (phosphorylated form); the interaction retains it in the cytoplasm. Interacts with GAB2. Interacts with MDM4 (phosphorylated); negatively regulates MDM4 activity toward TP53. Interacts with PKA-phosphorylated AANAT and SIRT2. Interacts with the 'Thr-369' phosphorylated form of DAPK2. Interacts with PI4KB, TBC1D22A and TBC1D22B. Interacts with SLITRK1. Interacts with LRRK2; this interaction is dependent on LRRK2 phosphorylation. Interacts with MARK2 and MARK3. Interacts with MEFV. Interacts with ENDOG, TSC2 and PIK3C3; interaction with ENDOG weakens its interaction with TSC2 and PIK3C3. Interacts with (phosphorylated) WDR24. Interacts with BEST1; this interaction promotes L-glutamate channel activity leading to the positive regulation of NMDA glutamate receptor activity through the L-glutamate secretion. Interacts with PKP1 (when phosphorylated); the interaction results in translocation of PKP1 to the cytoplasm and loss of intercellular adhesion in keratinocytes. Interacts with SPATA18/MIEAP; a protein that also plays a role in MALM. In terms of processing, phosphorylated by various PKC isozymes.

The protein resides in the cytoplasm. The protein localises to the cytosol. Its subcellular location is the mitochondrion matrix. Adapter protein implicated in the regulation of a large spectrum of both general and specialized signaling pathways. Binds to a large number of partners, usually by recognition of a phosphoserine or phosphothreonine motif. Binding generally results in the modulation of the activity of the binding partner. Promotes inactivation of WDR24 component of the GATOR2 complex by binding to phosphorylated WDR24. Participates in the positive regulation of NMDA glutamate receptor activity by promoting the L-glutamate secretion through interaction with BEST1. Reduces keratinocyte intercellular adhesion, via interacting with PKP1 and sequestering it in the cytoplasm, thereby reducing its incorporation into desmosomes. Plays a role in mitochondrial protein catabolic process (also named MALM) that promotes the degradation of damaged proteins inside mitochondria. This chain is 14-3-3 protein gamma, found in Ovis aries (Sheep).